Reading from the N-terminus, the 465-residue chain is Ribulose bisphosphate carboxylase large chain (465 aa).

Residue lysine 4 is modified to N6,N6,N6-trimethyllysine. 2 residues coordinate substrate: asparagine 113 and threonine 163. Catalysis depends on lysine 165, which acts as the Proton acceptor. Lysine 167 lines the substrate pocket. Residues lysine 191, aspartate 193, and glutamate 194 each coordinate Mg(2+). N6-carboxylysine is present on lysine 191. Histidine 284 functions as the Proton acceptor in the catalytic mechanism. Positions 285, 317, and 369 each coordinate substrate.

The protein belongs to the RuBisCO large chain family. Type I subfamily. In terms of assembly, heterohexadecamer of 8 large chains and 8 small chains; disulfide-linked. The disulfide link is formed within the large subunit homodimers. Requires Mg(2+) as cofactor. Post-translationally, the disulfide bond which can form in the large chain dimeric partners within the hexadecamer appears to be associated with oxidative stress and protein turnover.

Its subcellular location is the plastid. It localises to the chloroplast. The enzyme catalyses 2 (2R)-3-phosphoglycerate + 2 H(+) = D-ribulose 1,5-bisphosphate + CO2 + H2O. It catalyses the reaction D-ribulose 1,5-bisphosphate + O2 = 2-phosphoglycolate + (2R)-3-phosphoglycerate + 2 H(+). RuBisCO catalyzes two reactions: the carboxylation of D-ribulose 1,5-bisphosphate, the primary event in carbon dioxide fixation, as well as the oxidative fragmentation of the pentose substrate in the photorespiration process. Both reactions occur simultaneously and in competition at the same active site. In Cornus florida (Flowering dogwood), this protein is Ribulose bisphosphate carboxylase large chain.